A 101-amino-acid chain; its full sequence is Small ribosomal subunit protein uS14 (101 aa).

The protein belongs to the universal ribosomal protein uS14 family. In terms of assembly, part of the 30S ribosomal subunit. Contacts proteins S3 and S10.

Functionally, binds 16S rRNA, required for the assembly of 30S particles and may also be responsible for determining the conformation of the 16S rRNA at the A site. This chain is Small ribosomal subunit protein uS14, found in Neisseria meningitidis serogroup C / serotype 2a (strain ATCC 700532 / DSM 15464 / FAM18).